The chain runs to 731 residues: E3 ubiquitin-protein ligase COP1 (731 aa).

The tract at residues Met1 to Val40 is disordered. A Nuclear localization signal 1 motif is present at residues Gly109 to Arg113. Residues Cys136–Asn174 form an RING-type zinc finger. The Nuclear localization signal 2 signature appears at Lys195 to Lys206. Residues Leu233–Gly301 are a coiled coil. A Nuclear export signal motif is present at residues Leu235–Leu245. Residues Pro305 to Ile325 form a disordered region. 7 WD repeats span residues Asn419–Val458, Thr468–Val508, Glu511–Ser551, Glu553–Met593, Gly597–Ser635, Gly638–Thr677, and Arg691–Glu729. The interval Lys643–Phe645 is interaction with TRIB1.

Belongs to the COP1 family. Homodimer. Homodimerization is mediated by the coiled coil domain. Component of the DCX DET1-COP1 ubiquitin ligase complex at least composed of RBX1, DET1, DDB1, CUL4A and COP1. Isoform 2 does not interact with CUL4A but still binds to RBX1, suggesting that the interaction may be mediated by another cullin protein. Isoform 1 and isoform 2 interact with CUL5 but not with CUL1, CUL2 not CUL3. Interacts with bZIP transcription factors JUN, JUNB and JUND but not with FOS, ATF2 nor XBP1. Interacts with p53 (TP53). Interacts with COPS6; this interaction stabilizes RFWD2 through reducing its auto-ubiquitination and decelerating its turnover rate. Interacts with SFN; this interaction leads to SFN degradation. Isoform 4 forms heterodimers with isoform 1, preventing its association with DET1. Interacts with p53/TP53 and MTA1. Interacts with TRIB1 (via C-terminus) and TRIB2. Post-translationally, autoubiquitinated. MTA1 destabilizes it by promoting its autoubiquitination. Ubiquitously expressed at low level. Expressed at higher level in testis, placenta, skeletal muscle and heart.

The protein localises to the nucleus speckle. It localises to the cytoplasm. The enzyme catalyses S-ubiquitinyl-[E2 ubiquitin-conjugating enzyme]-L-cysteine + [acceptor protein]-L-lysine = [E2 ubiquitin-conjugating enzyme]-L-cysteine + N(6)-ubiquitinyl-[acceptor protein]-L-lysine.. The protein operates within protein modification; protein ubiquitination. Its activity is regulated as follows. TRIB1 competes with substrates for RFWD2 binding. Functionally, E3 ubiquitin-protein ligase that mediates ubiquitination and subsequent proteasomal degradation of target proteins. E3 ubiquitin ligases accept ubiquitin from an E2 ubiquitin-conjugating enzyme in the form of a thioester and then directly transfers the ubiquitin to targeted substrates. Involved in JUN ubiquitination and degradation. Directly involved in p53 (TP53) ubiquitination and degradation, thereby abolishing p53-dependent transcription and apoptosis. Ubiquitinates p53 independently of MDM2 or RCHY1. Probably mediates E3 ubiquitin ligase activity by functioning as the essential RING domain subunit of larger E3 complexes. In contrast, it does not constitute the catalytic RING subunit in the DCX DET1-COP1 complex that negatively regulates JUN, the ubiquitin ligase activity being mediated by RBX1. Involved in 14-3-3 protein sigma/SFN ubiquitination and proteasomal degradation, leading to AKT activation and promotion of cell survival. Ubiquitinates MTA1 leading to its proteasomal degradation. Upon binding to TRIB1, ubiquitinates CEBPA, which lacks a canonical COP1-binding motif. The polypeptide is E3 ubiquitin-protein ligase COP1 (Homo sapiens (Human)).